The following is a 410-amino-acid chain: Single Ig IL-1-related receptor (410 aa).

At 1–118 (MPGVCDRAPD…TLQRAGPTSH (118 aa)) the chain is on the extracellular side. The Ig-like C2-type domain occupies 9–109 (PDFLSPSEDQ…IQNISFSSFT (101 aa)). N-linked (GlcNAc...) asparagine glycosylation is found at asparagine 31, asparagine 73, asparagine 86, and asparagine 102. The cysteines at positions 32 and 98 are disulfide-linked. A helical; Signal-anchor for type III membrane protein transmembrane segment spans residues 119–139 (VAAVLASLLVLLALLLAALLY). Over 140–410 (VKCRLNVLLW…FYCLVSKDDM (271 aa)) the chain is Cytoplasmic. Residues 163 to 307 (KLYDAYVSYS…DFWKEVQLAL (145 aa)) form the TIR domain. Residues 340 to 390 (EGRALDSEVDPDPEGDLGVRGPVFGEPSAPPHTSGVSLGESRSSEVDVSDL) are disordered. At serine 383 the chain carries Phosphoserine.

This sequence belongs to the interleukin-1 receptor family. In terms of assembly, interacts with IL1R1, IRAK1, TLR4, TLR5, TLR9 and TRAF6. Upon IL-1 stimulation found in a complex at least composed of IL1R1, SIGIRR, MYD88, IRAK1 and TRAF6. Upon stimulation with LPC found in a complex at least composed of TLR4, SIG1IR, MYD88, IRAK1 and TRAF6. Interacts with PALM3. Mainly expressed in epithelial tissues such as kidney, lung and gut.

It is found in the membrane. Acts as a negative regulator of the Toll-like and IL-1R receptor signaling pathways. Attenuates the recruitment of receptor-proximal signaling components to the TLR4 receptor, probably through an TIR-TIR domain interaction with TLR4. Through its extracellular domain interferes with the heterodimerization of Il1R1 and IL1RAP. The protein is Single Ig IL-1-related receptor (SIGIRR) of Homo sapiens (Human).